The primary structure comprises 200 residues: Rho-related protein racD (200 aa).

Positions 20, 22, 23, 24, 25, 39, and 42 each coordinate GTP. T24 lines the Mg(2+) pocket. Short sequence motifs (switch) lie at residues 33–44 (NEFPKDYVPTVF) and 64–82 (DTAG…YPNT). T42 contributes to the Mg(2+) binding site. The GTP site is built by K123, D125, and A166. C197 is subject to Cysteine methyl ester. C197 carries S-geranylgeranyl cysteine lipidation. Positions 198-200 (ALL) are cleaved as a propeptide — removed in mature form.

Belongs to the small GTPase superfamily. Rho family. Mg(2+) serves as cofactor.

Its subcellular location is the cell membrane. It localises to the cytoplasm. The protein localises to the cytoskeleton. It carries out the reaction GTP + H2O = GDP + phosphate + H(+). Regulated by guanine nucleotide exchange factors (GEFs) which promote the exchange of bound GDP for free GTP, GTPase activating proteins (GAPs) which increase the GTP hydrolysis activity, and GDP dissociation inhibitors which inhibit the dissociation of the nucleotide from the GTPase. Its function is as follows. Small GTPase which cycles between active GTP-bound and inactive GDP-bound states. The protein is Rho-related protein racD of Entamoeba histolytica (strain ATCC 30459 / HM-1:IMSS / ABRM).